The following is a 217-amino-acid chain: NADH-quinone oxidoreductase subunit I (217 aa).

The disordered stretch occupies residues 22–41 (TTEQYPEEKKETAPRFHGRH). 2 consecutive 4Fe-4S ferredoxin-type domains span residues 43–73 (LNRH…VEGA) and 89–118 (RVYQ…MSND). [4Fe-4S] cluster is bound by residues C53, C56, C59, C63, C98, C101, C104, and C108. The interval 193 to 217 (ARRTAGEHSRADEVPAHGAGSERPR) is disordered.

This sequence belongs to the complex I 23 kDa subunit family. NDH-1 is composed of 14 different subunits. Subunits NuoA, H, J, K, L, M, N constitute the membrane sector of the complex. [4Fe-4S] cluster serves as cofactor.

The protein resides in the cell membrane. It catalyses the reaction a quinone + NADH + 5 H(+)(in) = a quinol + NAD(+) + 4 H(+)(out). NDH-1 shuttles electrons from NADH, via FMN and iron-sulfur (Fe-S) centers, to quinones in the respiratory chain. The immediate electron acceptor for the enzyme in this species is believed to be ubiquinone. Couples the redox reaction to proton translocation (for every two electrons transferred, four hydrogen ions are translocated across the cytoplasmic membrane), and thus conserves the redox energy in a proton gradient. The sequence is that of NADH-quinone oxidoreductase subunit I from Frankia casuarinae (strain DSM 45818 / CECT 9043 / HFP020203 / CcI3).